Here is a 277-residue protein sequence, read N- to C-terminus: Probable endonuclease 4 (277 aa).

Zn(2+) contacts are provided by His-67, His-107, Glu-142, Asp-176, His-179, His-211, Asp-224, His-226, and Glu-256.

This sequence belongs to the AP endonuclease 2 family. The cofactor is Zn(2+).

It catalyses the reaction Endonucleolytic cleavage to 5'-phosphooligonucleotide end-products.. Its function is as follows. Endonuclease IV plays a role in DNA repair. It cleaves phosphodiester bonds at apurinic or apyrimidinic (AP) sites, generating a 3'-hydroxyl group and a 5'-terminal sugar phosphate. This is Probable endonuclease 4 from Clostridium botulinum (strain Alaska E43 / Type E3).